A 122-amino-acid chain; its full sequence is Prefoldin subunit 1 (122 aa).

Belongs to the prefoldin subunit beta family. As to quaternary structure, heterohexamer of two PFD-alpha type and four PFD-beta type subunits.

In terms of biological role, binds specifically to cytosolic chaperonin (c-CPN) and transfers target proteins to it. Binds to nascent polypeptide chain and promotes folding in an environment in which there are many competing pathways for nonnative proteins. This is Prefoldin subunit 1 (pfdn1) from Danio rerio (Zebrafish).